A 313-amino-acid chain; its full sequence is Olfactory receptor 51A2 (313 aa).

Topologically, residues 1 to 27 (MSIINTSYVEITTFFLVGMPGLEYAHI) are extracellular. N-linked (GlcNAc...) asparagine glycosylation occurs at Asn-5. The chain crosses the membrane as a helical span at residues 28–48 (WISIPICSMYLIAILGNGTIL). At 49 to 56 (FIIKTEPS) the chain is on the cytoplasmic side. A helical transmembrane segment spans residues 57 to 77 (LHGPMYYFLSMLAMSDLGLSL). Over 78 to 101 (SSLPTVLSIFLFNAPETSSSACFA) the chain is Extracellular. Cys-99 and Cys-191 are disulfide-bonded. Residues 102 to 122 (QEFFIHGFSVLESSVLLIMSF) traverse the membrane as a helical segment. Over 123–141 (DRFLAIHNPLRYTSILTTV) the chain is Cytoplasmic. A helical membrane pass occupies residues 142–162 (RVAQIGIVFSFKSMLLVLPFP). Residues 163–198 (FTLRSLRYCKKNQLSHSYCLHQDVMKLACSDNRIDV) are Extracellular-facing. Residues 199-218 (IYGFFGALCLMVDFILIAVS) form a helical membrane-spanning segment. Topologically, residues 219–238 (YTLILKTVPGIASKKEELKA) are cytoplasmic. Residues 239–259 (LNTCVSHICAVIIFYLPIINL) form a helical membrane-spanning segment. Topologically, residues 260 to 274 (AVVHRFAGHVSPLIN) are extracellular. The chain crosses the membrane as a helical span at residues 275-295 (VLMANVLLLVPPLMKPIVYCV). Over 296 to 313 (KTKQIRVRVVAKLCQWKI) the chain is Cytoplasmic.

It belongs to the G-protein coupled receptor 1 family.

The protein localises to the cell membrane. Functionally, odorant receptor. This is Olfactory receptor 51A2 (OR51A2) from Homo sapiens (Human).